The chain runs to 360 residues: Histidinol-phosphate aminotransferase (360 aa).

At K218 the chain carries N6-(pyridoxal phosphate)lysine.

The protein belongs to the class-II pyridoxal-phosphate-dependent aminotransferase family. Histidinol-phosphate aminotransferase subfamily. In terms of assembly, homodimer. Pyridoxal 5'-phosphate serves as cofactor.

It catalyses the reaction L-histidinol phosphate + 2-oxoglutarate = 3-(imidazol-4-yl)-2-oxopropyl phosphate + L-glutamate. It participates in amino-acid biosynthesis; L-histidine biosynthesis; L-histidine from 5-phospho-alpha-D-ribose 1-diphosphate: step 7/9. The chain is Histidinol-phosphate aminotransferase from Chlorobium phaeobacteroides (strain DSM 266 / SMG 266 / 2430).